The following is a 37-amino-acid chain: Large ribosomal subunit protein bL36c (37 aa).

It belongs to the bacterial ribosomal protein bL36 family.

Its subcellular location is the plastid. It localises to the chloroplast. This chain is Large ribosomal subunit protein bL36c, found in Dioscorea elephantipes (Elephant's foot yam).